Reading from the N-terminus, the 227-residue chain is Floral homeotic protein DEFICIENS (227 aa).

The 55-residue stretch at 3–57 folds into the MADS-box domain; the sequence is RGKIQIKRIENQTNRQVTYSKRRNGLFKKAHELSVLCDAKVSIIMISSTQKLHEY. One can recognise a K-box domain in the interval 84–174; sequence YEKMQEHLKK…VLEFDARRED (91 aa).

It is found in the nucleus. Transcription factor involved in the genetic control of flower development. Acts in conjunction with GLOBOSA (glo). This chain is Floral homeotic protein DEFICIENS (DEFA), found in Antirrhinum majus (Garden snapdragon).